The sequence spans 492 residues: E3 ubiquitin-protein ligase ARIH2 (492 aa).

Residues 1–11 (MSVDMNSQGSD) show a composition bias toward polar residues. The segment at 1-37 (MSVDMNSQGSDSNEEDYDPNCEEEEEEEEDPGDIEDY) is disordered. Positions 12–36 (SNEEDYDPNCEEEEEEEEDPGDIED) are enriched in acidic residues. The UBA-like stretch occupies residues 64–111 (TYKESEGALHEHMTSLASVLKVSHSVAKLILVNFHWQVSEILDRYRSN). The TRIAD supradomain stretch occupies residues 134 to 343 (PPHHCAVCMQ…SEYYECSRYK (210 aa)). Residues C138, C141, C155, H157, C160, C163, C182, C187, C227, C232, C248, C251, C256, C259, H264, C269, C296, and C299 each contribute to the Zn(2+) site. Residues 138 to 187 (CAVCMQFVRKENLLSLACQHQFCRSCWEQHCSVLVKDGVGVGISCMAQDC) form an RING-type 1 zinc finger. An IBR-type zinc finger spans residues 207-269 (DKYRRYLFRD…RQMYHAPTDC (63 aa)). The RING-type 2; atypical zinc finger occupies 296-325 (CPKCNICIEKNGGCNHMQCSKCKHDFCWMC). The active site involves C309. The Zn(2+) site is built by C314, C317, C322, C325, H332, and C339. S352 bears the Phosphoserine mark. The interval 358–492 (REALKKYLFY…RTLLKDFHDT (135 aa)) is ariadne domain.

This sequence belongs to the RBR family. Ariadne subfamily. As to quaternary structure, interacts (via RING-type zinc finger 1) with UBE2L3. Interacts (via RING-type zinc finger 2) with UBE2N. Interacts with neddylated CUL5. Interacts (via RING-type 2) with GFI1B. Interacts with GFI1; prevents its ubiquitination and proteasomal degradation. Interacts with DCUN1D1 (via UBA-like domain); promotes DCUN1D1 ubiquitination. In terms of processing, ubiquitinated. Ubiquitination promotes proteasomal degradation.

Its subcellular location is the nucleus. The protein resides in the cytoplasm. It catalyses the reaction [E2 ubiquitin-conjugating enzyme]-S-ubiquitinyl-L-cysteine + [acceptor protein]-L-lysine = [E2 ubiquitin-conjugating enzyme]-L-cysteine + [acceptor protein]-N(6)-ubiquitinyl-L-lysine.. It functions in the pathway protein modification; protein ubiquitination. With respect to regulation, autoinhibited by the ariadne domain, which masks the second RING-type zinc finger that contains the active site and inhibits the E3 activity. Inhibition is relieved upon binding to neddylated cullin-RING ubiquitin ligase complexes, which activate the E3 ligase activity of ARIH1. Its function is as follows. E3 ubiquitin-protein ligase, which catalyzes ubiquitination of target proteins together with ubiquitin-conjugating enzyme E2 UBE2L3. Acts as an atypical E3 ubiquitin-protein ligase by working together with cullin-5-RING ubiquitin ligase complex (ECS complex, also named CRL5 complex) and initiating ubiquitination of ECS substrates: associates with ECS complex and specifically mediates addition of the first ubiquitin on ECS targets. The initial ubiquitin is then elongated. E3 ubiquitin-protein ligase activity is activated upon binding to neddylated form of the ECS complex. Mediates 'Lys-6', 'Lys-48'- and 'Lys-63'-linked polyubiquitination. May play a role in myelopoiesis. This chain is E3 ubiquitin-protein ligase ARIH2 (Arih2), found in Mus musculus (Mouse).